The sequence spans 1037 residues: Multidrug resistance protein MdtF (1037 aa).

The Cytoplasmic portion of the chain corresponds to 1 to 9; sequence MANYFIDRP. The chain crosses the membrane as a helical span at residues 10 to 30; sequence VFAWVLAIIMMLAGGLAIMNL. The Periplasmic segment spans residues 31–338; it reads PVAQYPQIAP…TTPFIEISIQ (308 aa). A helical membrane pass occupies residues 339–359; sequence EVFKTLVEAIILVFLVMYLFL. Topologically, residues 360–369 are cytoplasmic; sequence QNFRATIIPT. A helical transmembrane segment spans residues 370–390; sequence IAVPVVILGTFAILSAVGFTI. Residues 391-392 lie on the Periplasmic side of the membrane; it reads NT. The chain crosses the membrane as a helical span at residues 393–413; sequence LTMFGMVLAIGLLVDDAIVVV. The Cytoplasmic portion of the chain corresponds to 414–441; sequence ENVERVIAEDKLPPKEATHKSMGQIQRA. Residues 442–462 traverse the membrane as a helical segment; that stretch reads LVGIAVVLSAVFMPMAFMSGA. Residues 463-471 lie on the Periplasmic side of the membrane; it reads TGEIYRQFS. The helical transmembrane segment at 472-492 threads the bilayer; that stretch reads ITLISSMLLSVFVAMSLTPAL. At 493–534 the chain is on the cytoplasmic side; that stretch reads CATILKAAPEGGHKPNALFARFNTLFEKSTQHYTDSTRSLLR. A helical transmembrane segment spans residues 535 to 555; it reads CTGRYMVIYLLICAGMAVLFL. The Periplasmic segment spans residues 556-870; it reads RTPTSFLPEE…SYQEALSSNQ (315 aa). A helical membrane pass occupies residues 871-891; sequence APALYAISLVVVFLALAALYE. S892 is a topological domain (cytoplasmic). A helical membrane pass occupies residues 893–913; sequence WSIPFSVMLVVPLGVVGALLA. Residues 914 to 927 lie on the Periplasmic side of the membrane; sequence TDLRGLSNDVYFQV. A helical membrane pass occupies residues 928–948; it reads GLLTTIGLSAKNAILIVEFAV. The Cytoplasmic portion of the chain corresponds to 949–972; sequence EMMQKEGKTPIEAIIEAARMRLRP. Residues 973–993 form a helical membrane-spanning segment; the sequence is ILMTSLAFILGVLPLVISHGA. The Periplasmic segment spans residues 994–1006; sequence GSGAQNAVGTGVM. Residues 1007 to 1027 form a helical membrane-spanning segment; sequence GGMFAATVLAIYFVPVFFVVV. Over 1028 to 1037 the chain is Cytoplasmic; that stretch reads EHLFARFKKA.

This sequence belongs to the resistance-nodulation-cell division (RND) (TC 2.A.6) family. In terms of assembly, homotrimer. Part of the tripartite efflux system MdtEF-TolC, which is composed of an inner membrane transporter, MdtF, a membrane fusion protein, MdtE, and an outer membrane component, TolC. The complex forms a large protein conduit and can translocate molecules across both the inner and outer membranes.

It is found in the cell inner membrane. In terms of biological role, part of the tripartite efflux system MdtEF-TolC, which confers resistance to various compounds. This is Multidrug resistance protein MdtF (mdtF) from Escherichia coli O157:H7.